The following is a 256-amino-acid chain: UPF0280 protein MTH_727 (256 aa).

This sequence belongs to the UPF0280 family.

This Methanothermobacter thermautotrophicus (strain ATCC 29096 / DSM 1053 / JCM 10044 / NBRC 100330 / Delta H) (Methanobacterium thermoautotrophicum) protein is UPF0280 protein MTH_727.